The chain runs to 180 residues: Large ribosomal subunit protein uL5 (180 aa).

It belongs to the universal ribosomal protein uL5 family. As to quaternary structure, part of the 50S ribosomal subunit; part of the 5S rRNA/L5/L18/L25 subcomplex. Contacts the 5S rRNA and the P site tRNA. Forms a bridge to the 30S subunit in the 70S ribosome.

In terms of biological role, this is one of the proteins that bind and probably mediate the attachment of the 5S RNA into the large ribosomal subunit, where it forms part of the central protuberance. In the 70S ribosome it contacts protein S13 of the 30S subunit (bridge B1b), connecting the 2 subunits; this bridge is implicated in subunit movement. Contacts the P site tRNA; the 5S rRNA and some of its associated proteins might help stabilize positioning of ribosome-bound tRNAs. This is Large ribosomal subunit protein uL5 from Clostridium tetani (strain Massachusetts / E88).